The chain runs to 373 residues: Chaperone protein DnaJ (373 aa).

Positions 4-69 (SYYEILEITQ…EKRAIYDRYG (66 aa)) constitute a J domain. The segment at 135–212 (GCKKNIDFTY…CKGLGYNESK (78 aa)) adopts a CR-type zinc-finger fold. Zn(2+) contacts are provided by Cys-148, Cys-151, Cys-164, Cys-167, Cys-186, Cys-189, Cys-200, and Cys-203. CXXCXGXG motif repeat units follow at residues 148-155 (CKTCNGTG), 164-171 (CPKCQGRG), 186-193 (CPDCQGIG), and 200-207 (CSDCKGLG).

It belongs to the DnaJ family. In terms of assembly, homodimer. Requires Zn(2+) as cofactor.

The protein resides in the cytoplasm. Functionally, participates actively in the response to hyperosmotic and heat shock by preventing the aggregation of stress-denatured proteins and by disaggregating proteins, also in an autonomous, DnaK-independent fashion. Unfolded proteins bind initially to DnaJ; upon interaction with the DnaJ-bound protein, DnaK hydrolyzes its bound ATP, resulting in the formation of a stable complex. GrpE releases ADP from DnaK; ATP binding to DnaK triggers the release of the substrate protein, thus completing the reaction cycle. Several rounds of ATP-dependent interactions between DnaJ, DnaK and GrpE are required for fully efficient folding. Also involved, together with DnaK and GrpE, in the DNA replication of plasmids through activation of initiation proteins. The polypeptide is Chaperone protein DnaJ (Campylobacter jejuni subsp. jejuni serotype O:2 (strain ATCC 700819 / NCTC 11168)).